A 456-amino-acid chain; its full sequence is NADH-quinone oxidoreductase subunit N (456 aa).

A run of 14 helical transmembrane segments spans residues 6–26 (LFAL…MLLA), 45–65 (VAAL…GALF), 75–95 (TAYA…AGVA), 97–117 (EAPA…GAGH), 118–138 (AATL…LFAF), 151–171 (FLVM…LIYA), 181–201 (WVGH…GLAF), 220–240 (PAGA…IAIL), 252–272 (LWSA…NVLA), 281–301 (MLGY…ASGA), 308–328 (VLFY…ASAM), 355–375 (GLLS…LYLF), 382–402 (ESWI…YYYI), and 426–446 (LLLI…LVLI).

It belongs to the complex I subunit 2 family. In terms of assembly, NDH-1 is composed of 14 different subunits. Subunits NuoA, H, J, K, L, M, N constitute the membrane sector of the complex.

The protein localises to the cell inner membrane. It carries out the reaction a quinone + NADH + 5 H(+)(in) = a quinol + NAD(+) + 4 H(+)(out). NDH-1 shuttles electrons from NADH, via FMN and iron-sulfur (Fe-S) centers, to quinones in the respiratory chain. The immediate electron acceptor for the enzyme in this species is believed to be ubiquinone. Couples the redox reaction to proton translocation (for every two electrons transferred, four hydrogen ions are translocated across the cytoplasmic membrane), and thus conserves the redox energy in a proton gradient. The polypeptide is NADH-quinone oxidoreductase subunit N (Rhodopseudomonas palustris (strain BisA53)).